The primary structure comprises 72 residues: Translation initiation factor IF-1 (72 aa).

The S1-like domain maps to 1-72 (MAKDDVIEVE…TRGRITYRYK (72 aa)). Position 60 is a phosphotyrosine (Tyr60).

The protein belongs to the IF-1 family. In terms of assembly, component of the 30S ribosomal translation pre-initiation complex which assembles on the 30S ribosome in the order IF-2 and IF-3, IF-1 and N-formylmethionyl-tRNA(fMet); mRNA recruitment can occur at any time during PIC assembly.

The protein localises to the cytoplasm. Functionally, one of the essential components for the initiation of protein synthesis. Stabilizes the binding of IF-2 and IF-3 on the 30S subunit to which N-formylmethionyl-tRNA(fMet) subsequently binds. Helps modulate mRNA selection, yielding the 30S pre-initiation complex (PIC). Upon addition of the 50S ribosomal subunit IF-1, IF-2 and IF-3 are released leaving the mature 70S translation initiation complex. The sequence is that of Translation initiation factor IF-1 from Oceanobacillus iheyensis (strain DSM 14371 / CIP 107618 / JCM 11309 / KCTC 3954 / HTE831).